We begin with the raw amino-acid sequence, 332 residues long: Glycerol-3-phosphate dehydrogenase [NAD(P)+] (332 aa).

NADPH-binding residues include Trp11, Arg30, and Lys108. Residues Lys108, Gly137, and Ser139 each contribute to the sn-glycerol 3-phosphate site. Ala141 provides a ligand contact to NADPH. The sn-glycerol 3-phosphate site is built by Lys192, Asp245, Ser255, Arg256, and Asn257. Lys192 acts as the Proton acceptor in catalysis. Arg256 lines the NADPH pocket. Positions 280 and 282 each coordinate NADPH.

It belongs to the NAD-dependent glycerol-3-phosphate dehydrogenase family.

The protein localises to the cytoplasm. It catalyses the reaction sn-glycerol 3-phosphate + NAD(+) = dihydroxyacetone phosphate + NADH + H(+). The enzyme catalyses sn-glycerol 3-phosphate + NADP(+) = dihydroxyacetone phosphate + NADPH + H(+). The protein operates within membrane lipid metabolism; glycerophospholipid metabolism. In terms of biological role, catalyzes the reduction of the glycolytic intermediate dihydroxyacetone phosphate (DHAP) to sn-glycerol 3-phosphate (G3P), the key precursor for phospholipid synthesis. This chain is Glycerol-3-phosphate dehydrogenase [NAD(P)+], found in Burkholderia pseudomallei (strain 1710b).